We begin with the raw amino-acid sequence, 200 residues long: Recombination protein RecR (200 aa).

A C4-type zinc finger spans residues 58 to 75; the sequence is CSTCFCLKNLPESNCEFC. The Toprim domain occupies 82-177; it reads STLCIVATPK…SISRLALGLP (96 aa).

Belongs to the RecR family.

Its function is as follows. May play a role in DNA repair. It seems to be involved in an RecBC-independent recombinational process of DNA repair. It may act with RecF and RecO. This chain is Recombination protein RecR, found in Chlamydia caviae (strain ATCC VR-813 / DSM 19441 / 03DC25 / GPIC) (Chlamydophila caviae).